The chain runs to 867 residues: Alanine--tRNA ligase (867 aa).

The Zn(2+) site is built by H555, H559, C657, and H661.

The protein belongs to the class-II aminoacyl-tRNA synthetase family. It depends on Zn(2+) as a cofactor.

It localises to the cytoplasm. The enzyme catalyses tRNA(Ala) + L-alanine + ATP = L-alanyl-tRNA(Ala) + AMP + diphosphate. Catalyzes the attachment of alanine to tRNA(Ala) in a two-step reaction: alanine is first activated by ATP to form Ala-AMP and then transferred to the acceptor end of tRNA(Ala). Also edits incorrectly charged Ser-tRNA(Ala) and Gly-tRNA(Ala) via its editing domain. The chain is Alanine--tRNA ligase from Psychromonas ingrahamii (strain DSM 17664 / CCUG 51855 / 37).